A 486-amino-acid chain; its full sequence is ATP synthase subunit beta 2 (486 aa).

166 to 173 is a binding site for ATP; that stretch reads GGAGVGKT.

It belongs to the ATPase alpha/beta chains family. F-type ATPases have 2 components, CF(1) - the catalytic core - and CF(0) - the membrane proton channel. CF(1) has five subunits: alpha(3), beta(3), gamma(1), delta(1), epsilon(1). CF(0) has three main subunits: a(1), b(2) and c(9-12). The alpha and beta chains form an alternating ring which encloses part of the gamma chain. CF(1) is attached to CF(0) by a central stalk formed by the gamma and epsilon chains, while a peripheral stalk is formed by the delta and b chains.

It is found in the cell inner membrane. The catalysed reaction is ATP + H2O + 4 H(+)(in) = ADP + phosphate + 5 H(+)(out). In terms of biological role, produces ATP from ADP in the presence of a proton gradient across the membrane. The catalytic sites are hosted primarily by the beta subunits. This is ATP synthase subunit beta 2 from Gluconobacter oxydans (strain 621H) (Gluconobacter suboxydans).